The following is a 300-amino-acid chain: Putative lysophosphatidic acid:oleoyl-CoA acyltransferase (300 aa).

Residues 32 to 52 (WILIVVVMILRVPLCIISVTL) form a helical membrane-spanning segment. Residues 115 to 120 (HSSPLD) carry the HXXXXD motif motif.

Belongs to the 1-acyl-sn-glycerol-3-phosphate acyltransferase family.

It is found in the lipid droplet. Its subcellular location is the endoplasmic reticulum membrane. The protein resides in the golgi apparatus membrane. The catalysed reaction is a 1-acyl-sn-glycero-3-phosphate + an acyl-CoA = a 1,2-diacyl-sn-glycero-3-phosphate + CoA. Functionally, acyl-CoA-dependent lysophosphatidic acid acyltransferase with preference for oleoyl-CoA. Involved in triacylglyceride homeostasis and lipid droplet formation. Involved in vacuolar protein sorting. In Schizosaccharomyces pombe (strain 972 / ATCC 24843) (Fission yeast), this protein is Putative lysophosphatidic acid:oleoyl-CoA acyltransferase (vps66).